The sequence spans 149 residues: MSTNICSFKDRCVSILCCKFCKQVLSSRGMKAVLLADTEIDLFSTDIPPTNAVDFTGRCYFTKICKCKLKDIACLKCGNIVVYHVIVPCSSCLLSCNNRHFWMFHSQAVYDINRLDSTGVNVLLRGNLPEIEESTDEDVLNISAEECIR.

It belongs to the FAM72 family.

This chain is Protein FAM72C (FAM72C), found in Homo sapiens (Human).